The chain runs to 501 residues: ATP synthase subunit alpha (501 aa).

169-176 (GDRQTGKT) contributes to the ATP binding site.

This sequence belongs to the ATPase alpha/beta chains family. F-type ATPases have 2 components, CF(1) - the catalytic core - and CF(0) - the membrane proton channel. CF(1) has five subunits: alpha(3), beta(3), gamma(1), delta(1), epsilon(1). CF(0) has three main subunits: a(1), b(2) and c(9-12). The alpha and beta chains form an alternating ring which encloses part of the gamma chain. CF(1) is attached to CF(0) by a central stalk formed by the gamma and epsilon chains, while a peripheral stalk is formed by the delta and b chains.

It is found in the cell inner membrane. It carries out the reaction ATP + H2O + 4 H(+)(in) = ADP + phosphate + 5 H(+)(out). In terms of biological role, produces ATP from ADP in the presence of a proton gradient across the membrane. The alpha chain is a regulatory subunit. This Campylobacter jejuni subsp. jejuni serotype O:6 (strain 81116 / NCTC 11828) protein is ATP synthase subunit alpha.